We begin with the raw amino-acid sequence, 118 residues long: Large ribosomal subunit protein bL20 (118 aa).

Belongs to the bacterial ribosomal protein bL20 family.

In terms of biological role, binds directly to 23S ribosomal RNA and is necessary for the in vitro assembly process of the 50S ribosomal subunit. It is not involved in the protein synthesizing functions of that subunit. The polypeptide is Large ribosomal subunit protein bL20 (Lachnoclostridium phytofermentans (strain ATCC 700394 / DSM 18823 / ISDg) (Clostridium phytofermentans)).